The following is a 364-amino-acid chain: Phosphoserine aminotransferase (364 aa).

R46 contacts L-glutamate. Pyridoxal 5'-phosphate is bound by residues 80–81 (AR), W106, T157, D176, and Q199. K200 carries the N6-(pyridoxal phosphate)lysine modification. Pyridoxal 5'-phosphate is bound at residue 241 to 242 (NT).

Belongs to the class-V pyridoxal-phosphate-dependent aminotransferase family. SerC subfamily. Homodimer. Pyridoxal 5'-phosphate is required as a cofactor.

It localises to the cytoplasm. The catalysed reaction is O-phospho-L-serine + 2-oxoglutarate = 3-phosphooxypyruvate + L-glutamate. It catalyses the reaction 4-(phosphooxy)-L-threonine + 2-oxoglutarate = (R)-3-hydroxy-2-oxo-4-phosphooxybutanoate + L-glutamate. Its pathway is amino-acid biosynthesis; L-serine biosynthesis; L-serine from 3-phospho-D-glycerate: step 2/3. It participates in cofactor biosynthesis; pyridoxine 5'-phosphate biosynthesis; pyridoxine 5'-phosphate from D-erythrose 4-phosphate: step 3/5. In terms of biological role, catalyzes the reversible conversion of 3-phosphohydroxypyruvate to phosphoserine and of 3-hydroxy-2-oxo-4-phosphonooxybutanoate to phosphohydroxythreonine. This chain is Phosphoserine aminotransferase, found in Vibrio parahaemolyticus serotype O3:K6 (strain RIMD 2210633).